Reading from the N-terminus, the 296-residue chain is Ribosomal protein L11 methyltransferase (296 aa).

Residues Thr139, Gly163, Asp185, and Asn232 each coordinate S-adenosyl-L-methionine.

Belongs to the methyltransferase superfamily. PrmA family.

The protein resides in the cytoplasm. The enzyme catalyses L-lysyl-[protein] + 3 S-adenosyl-L-methionine = N(6),N(6),N(6)-trimethyl-L-lysyl-[protein] + 3 S-adenosyl-L-homocysteine + 3 H(+). Functionally, methylates ribosomal protein L11. The chain is Ribosomal protein L11 methyltransferase from Picosynechococcus sp. (strain ATCC 27264 / PCC 7002 / PR-6) (Agmenellum quadruplicatum).